Consider the following 310-residue polypeptide: 5'-adenylylsulfate reductase-like 4 (310 aa).

A signal peptide spans 1 to 22; that stretch reads MEKEILLLLLVIMFLTVADVDA. Positions 49–168 constitute a Thioredoxin domain; the sequence is GVESDERPRF…LVAFYSDVTG (120 aa). Asn143 and Asn190 each carry an N-linked (GlcNAc...) asparagine glycan. The chain crosses the membrane as a helical span at residues 217–237; it reads LAIVFVLLRLLHLIYPTLVVF.

The protein localises to the membrane. The chain is 5'-adenylylsulfate reductase-like 4 (APRL4) from Arabidopsis thaliana (Mouse-ear cress).